A 424-amino-acid polypeptide reads, in one-letter code: Type II methyltransferase M.XorII (424 aa).

The 364-residue stretch at 4 to 367 folds into the SAM-dependent MTase C5-type domain; that stretch reads PIGIDLFAGA…GQIMKALRKK (364 aa). The active site involves C83. The segment at 404–424 is disordered; sequence RSRPVDRPAPRRHEERELVTA. Basic and acidic residues predominate over residues 406–424; the sequence is RPVDRPAPRRHEERELVTA.

It belongs to the class I-like SAM-binding methyltransferase superfamily. C5-methyltransferase family.

The catalysed reaction is a 2'-deoxycytidine in DNA + S-adenosyl-L-methionine = a 5-methyl-2'-deoxycytidine in DNA + S-adenosyl-L-homocysteine + H(+). Its function is as follows. A methylase that recognizes the double-stranded sequence 5'-CGATCG-3', methylates C-? on both strands and protects the DNA from cleavage by the XorII endonuclease. The protein is Type II methyltransferase M.XorII (xorIIM) of Xanthomonas oryzae pv. oryzae (strain KACC10331 / KXO85).